Here is an 827-residue protein sequence, read N- to C-terminus: Mitogen-activated protein kinase kinase kinase kinase 1 (827 aa).

Residues 17–274 form the Protein kinase domain; sequence YDLLQRLGGG…ATKMLSHQLV (258 aa). Residues 23–31 and Lys-46 contribute to the ATP site; that span reads LGGGTYGEV. Residue Asp-137 is the Proton acceptor of the active site. Thr-165 is modified (phosphothreonine; by autocatalysis). Position 171 is a phosphoserine; by autocatalysis (Ser-171). Thr-175 is modified (phosphothreonine; by autocatalysis). The interval 296 to 315 is disordered; it reads KGLPVDIEDEEPEPPPAIPR. The residue at position 354 (Thr-354) is a Phosphothreonine; by autocatalysis. Positions 359–485 are disordered; it reads PPAHFGSTSP…KMRGKMENEK (127 aa). Ser-373, Ser-375, Ser-403, Ser-405, and Ser-419 each carry phosphoserine. Residues 374 to 383 are compositionally biased toward acidic residues; it reads DSDDDYDDVD. Composition is skewed to pro residues over residues 429–443 and 461–471; these read GPPPRTPRPGPPPAT and APEPGQPPLVP. The span at 472 to 485 shows a compositional bias: basic and acidic residues; the sequence is PRKEKMRGKMENEK. The region spanning 501–806 is the CNH domain; that stretch reads PLQIHSTAAW…TFRLLCSPRP (306 aa). Ser-592 bears the Phosphoserine mark.

This sequence belongs to the protein kinase superfamily. STE Ser/Thr protein kinase family. STE20 subfamily. Interacts with MAP3K1. Interacts with FBXW8. Interacts with CLNK (via its SH2 domain). Mg(2+) serves as cofactor. In terms of processing, autophosphorylates: phosphorylation promotes ubiquitination by the Cul7-RING(FBXW8) ubiquitin-protein ligase complex, leading to its degradation by the proteasome. Post-translationally, tyrosine-phosphorylated after activation of hemopoietic cells. Ubiquitinated by the Cul7-RING(FBXW8) ubiquitin-protein ligase complex following autophosphorylation, leading to its degradation by the proteasome. In terms of tissue distribution, expressed in hemopoietic cells (at protein level). Ubiquitously expressed in all tissues examined at embryonic stage 16.5 dpc with high levels in lung, heart and fetal liver. In the neonate, expression is restricted to the tissues which undergo lineage decisions, lung, thymus, liver, kidney and brain. In the adult, expression is limited to hemopoietic organs, thymus, bone marrow, and spleen and to the testis.

It carries out the reaction L-seryl-[protein] + ATP = O-phospho-L-seryl-[protein] + ADP + H(+). It catalyses the reaction L-threonyl-[protein] + ATP = O-phospho-L-threonyl-[protein] + ADP + H(+). Functionally, serine/threonine-protein kinase, which plays a role in the response to environmental stress. Appears to act upstream of the JUN N-terminal pathway. Activator of the Hippo signaling pathway which plays a pivotal role in organ size control and tumor suppression by restricting proliferation and promoting apoptosis. MAP4Ks act in parallel to and are partially redundant with STK3/MST2 and STK4/MST2 in the phosphorylation and activation of LATS1/2, and establish MAP4Ks as components of the expanded Hippo pathway. May play a role in hematopoietic lineage decisions and growth regulation. Together with CLNK, it enhances CD3-triggered activation of T-cells and subsequent IL2 production. The chain is Mitogen-activated protein kinase kinase kinase kinase 1 (Map4k1) from Mus musculus (Mouse).